The chain runs to 466 residues: Ribulose bisphosphate carboxylase large chain (466 aa).

Position 5 is an N6,N6,N6-trimethyllysine (K5). Substrate is bound by residues N114 and T164. The active-site Proton acceptor is the K166. K168 contacts substrate. Mg(2+) is bound by residues K192, D194, and E195. Position 192 is an N6-carboxylysine (K192). Catalysis depends on H285, which acts as the Proton acceptor. Substrate contacts are provided by R286, H318, and S370.

Belongs to the RuBisCO large chain family. Type I subfamily. Heterohexadecamer of 8 large chains and 8 small chains; disulfide-linked. The disulfide link is formed within the large subunit homodimers. Requires Mg(2+) as cofactor. Post-translationally, the disulfide bond which can form in the large chain dimeric partners within the hexadecamer appears to be associated with oxidative stress and protein turnover.

It localises to the plastid. It is found in the chloroplast. It carries out the reaction 2 (2R)-3-phosphoglycerate + 2 H(+) = D-ribulose 1,5-bisphosphate + CO2 + H2O. The enzyme catalyses D-ribulose 1,5-bisphosphate + O2 = 2-phosphoglycolate + (2R)-3-phosphoglycerate + 2 H(+). RuBisCO catalyzes two reactions: the carboxylation of D-ribulose 1,5-bisphosphate, the primary event in carbon dioxide fixation, as well as the oxidative fragmentation of the pentose substrate in the photorespiration process. Both reactions occur simultaneously and in competition at the same active site. The polypeptide is Ribulose bisphosphate carboxylase large chain (Asarum canadense (Wild ginger)).